The sequence spans 378 residues: MKILVDENMPYARDLFSRLGEVTAVPGRPIPVAQLADADALMVRSVTKVNESLLAGKPIKFVGTATAGTDHVDEAWLKQAGIGFSAAPGCNAIAVVEYVFSSLLMLAERDGFSLHDRTVGIVGVGNVGRRLQARLEALGIKTLLCDPPRVDRGDEGDFRSLDELVQHADILTFHTPLFKDGPYKTLHLADEKLIRSLKPGAILINACRGAVVDNTALLTCLNEGQKLSVVLDVWEGEPELNVELLTKVDIGTPHIAGYTLEGKARGTTQVFEAYSKFIGHEQHVALDTLLPAPEFGRITLHGPLDQPTLKRLVHLVYDVRRDDAPLRKVAGIPGEFDKLRKNYLERREWSSLYVICDDASAASLLCKLGFNAVHHPAR.

2 residues coordinate substrate: S45 and T66. NAD(+) is bound by residues D146 and T175. R208 is an active-site residue. NAD(+) is bound at residue D232. Residue E237 is part of the active site. H254 acts as the Proton donor in catalysis. NAD(+) is bound at residue G257. Y258 contacts substrate.

Belongs to the D-isomer specific 2-hydroxyacid dehydrogenase family. PdxB subfamily. In terms of assembly, homodimer.

Its subcellular location is the cytoplasm. It catalyses the reaction 4-phospho-D-erythronate + NAD(+) = (R)-3-hydroxy-2-oxo-4-phosphooxybutanoate + NADH + H(+). It participates in cofactor biosynthesis; pyridoxine 5'-phosphate biosynthesis; pyridoxine 5'-phosphate from D-erythrose 4-phosphate: step 2/5. Functionally, catalyzes the oxidation of erythronate-4-phosphate to 3-hydroxy-2-oxo-4-phosphonooxybutanoate. The protein is Erythronate-4-phosphate dehydrogenase of Escherichia coli (strain 55989 / EAEC).